The following is a 329-amino-acid chain: Ribosomal RNA small subunit methyltransferase H (329 aa).

Residues 44–46 (GGY), Asp-62, Asp-110, and Gln-117 contribute to the S-adenosyl-L-methionine site. A disordered region spans residues 297–329 (APAELAANPRARSARLRSAERTSAPARRLGDAA).

This sequence belongs to the methyltransferase superfamily. RsmH family.

The protein resides in the cytoplasm. The catalysed reaction is cytidine(1402) in 16S rRNA + S-adenosyl-L-methionine = N(4)-methylcytidine(1402) in 16S rRNA + S-adenosyl-L-homocysteine + H(+). Specifically methylates the N4 position of cytidine in position 1402 (C1402) of 16S rRNA. The protein is Ribosomal RNA small subunit methyltransferase H of Rhodospirillum centenum (strain ATCC 51521 / SW).